The sequence spans 120 residues: UPF0231 protein YacL (120 aa).

It belongs to the UPF0231 family.

The chain is UPF0231 protein YacL from Escherichia coli O6:K15:H31 (strain 536 / UPEC).